The primary structure comprises 247 residues: Triosephosphate isomerase (247 aa).

Residues Asn10 and Lys12 each coordinate substrate. His94 acts as the Electrophile in catalysis. Glu164 acts as the Proton acceptor in catalysis.

Belongs to the triosephosphate isomerase family. As to quaternary structure, homodimer.

The protein resides in the cytoplasm. The catalysed reaction is D-glyceraldehyde 3-phosphate = dihydroxyacetone phosphate. It catalyses the reaction dihydroxyacetone phosphate = methylglyoxal + phosphate. It functions in the pathway carbohydrate biosynthesis; gluconeogenesis. It participates in carbohydrate degradation; glycolysis; D-glyceraldehyde 3-phosphate from glycerone phosphate: step 1/1. Functionally, triosephosphate isomerase is an extremely efficient metabolic enzyme that catalyzes the interconversion between dihydroxyacetone phosphate (DHAP) and D-glyceraldehyde-3-phosphate (G3P) in glycolysis and gluconeogenesis. It is also responsible for the non-negligible production of methylglyoxal a reactive cytotoxic side-product that modifies and can alter proteins, DNA and lipids. The protein is Triosephosphate isomerase (tpi-1) of Caenorhabditis elegans.